A 431-amino-acid polypeptide reads, in one-letter code: Adenylosuccinate synthetase (431 aa).

GTP-binding positions include 13–19 and 41–43; these read GDEGKGK and GHT. Asp-14 acts as the Proton acceptor in catalysis. 2 residues coordinate Mg(2+): Asp-14 and Gly-41. Residues 14-17, 39-42, Thr-130, Arg-144, Gln-225, Thr-240, and Arg-304 contribute to the IMP site; these read DEGK and NAGH. Residue His-42 is the Proton donor of the active site. Substrate is bound at residue 300-306; that stretch reads ATTGRKR. GTP-binding positions include Arg-306, 332–334, and 415–417; these read KLD and STG.

The protein belongs to the adenylosuccinate synthetase family. Homodimer. Requires Mg(2+) as cofactor.

It localises to the cytoplasm. The catalysed reaction is IMP + L-aspartate + GTP = N(6)-(1,2-dicarboxyethyl)-AMP + GDP + phosphate + 2 H(+). It functions in the pathway purine metabolism; AMP biosynthesis via de novo pathway; AMP from IMP: step 1/2. Plays an important role in the de novo pathway of purine nucleotide biosynthesis. Catalyzes the first committed step in the biosynthesis of AMP from IMP. The polypeptide is Adenylosuccinate synthetase (Shewanella denitrificans (strain OS217 / ATCC BAA-1090 / DSM 15013)).